Consider the following 416-residue polypeptide: Serine hydroxymethyltransferase (416 aa).

(6S)-5,6,7,8-tetrahydrofolate-binding positions include Leu118 and 122 to 124 (GHL). Lys226 bears the N6-(pyridoxal phosphate)lysine mark. (6S)-5,6,7,8-tetrahydrofolate-binding positions include Glu242 and 350–352 (SPF).

It belongs to the SHMT family. As to quaternary structure, homodimer. Pyridoxal 5'-phosphate is required as a cofactor.

The protein localises to the cytoplasm. It catalyses the reaction (6R)-5,10-methylene-5,6,7,8-tetrahydrofolate + glycine + H2O = (6S)-5,6,7,8-tetrahydrofolate + L-serine. It functions in the pathway one-carbon metabolism; tetrahydrofolate interconversion. It participates in amino-acid biosynthesis; glycine biosynthesis; glycine from L-serine: step 1/1. Functionally, catalyzes the reversible interconversion of serine and glycine with tetrahydrofolate (THF) serving as the one-carbon carrier. This reaction serves as the major source of one-carbon groups required for the biosynthesis of purines, thymidylate, methionine, and other important biomolecules. Also exhibits THF-independent aldolase activity toward beta-hydroxyamino acids, producing glycine and aldehydes, via a retro-aldol mechanism. The protein is Serine hydroxymethyltransferase of Helicobacter pylori (strain Shi470).